The sequence spans 425 residues: Glutamate-1-semialdehyde 2,1-aminomutase (425 aa).

K265 is modified (N6-(pyridoxal phosphate)lysine).

Belongs to the class-III pyridoxal-phosphate-dependent aminotransferase family. HemL subfamily. As to quaternary structure, homodimer. Pyridoxal 5'-phosphate is required as a cofactor.

The protein resides in the cytoplasm. It catalyses the reaction (S)-4-amino-5-oxopentanoate = 5-aminolevulinate. Its pathway is porphyrin-containing compound metabolism; protoporphyrin-IX biosynthesis; 5-aminolevulinate from L-glutamyl-tRNA(Glu): step 2/2. The sequence is that of Glutamate-1-semialdehyde 2,1-aminomutase from Nitrosospira multiformis (strain ATCC 25196 / NCIMB 11849 / C 71).